The following is a 367-amino-acid chain: Phosphoribosylaminoimidazole-succinocarboxamide synthase (367 aa).

The protein belongs to the SAICAR synthetase family.

The catalysed reaction is 5-amino-1-(5-phospho-D-ribosyl)imidazole-4-carboxylate + L-aspartate + ATP = (2S)-2-[5-amino-1-(5-phospho-beta-D-ribosyl)imidazole-4-carboxamido]succinate + ADP + phosphate + 2 H(+). The protein operates within purine metabolism; IMP biosynthesis via de novo pathway; 5-amino-1-(5-phospho-D-ribosyl)imidazole-4-carboxamide from 5-amino-1-(5-phospho-D-ribosyl)imidazole-4-carboxylate: step 1/2. The protein is Phosphoribosylaminoimidazole-succinocarboxamide synthase of Shewanella halifaxensis (strain HAW-EB4).